Reading from the N-terminus, the 205-residue chain is RNA pyrophosphohydrolase (205 aa).

A Nudix hydrolase domain is found at 6-149 (GFRPNVGIVL…KRGVYARALR (144 aa)). Positions 38 to 59 (GGMNTDETPVEAMYRELREETG) match the Nudix box motif. A disordered region spans residues 178–205 (GSSAAGHDRPRKRPRKRGGVLPVRINND). Over residues 186 to 195 (RPRKRPRKRG) the composition is skewed to basic residues.

This sequence belongs to the Nudix hydrolase family. RppH subfamily. It depends on a divalent metal cation as a cofactor.

Its function is as follows. Accelerates the degradation of transcripts by removing pyrophosphate from the 5'-end of triphosphorylated RNA, leading to a more labile monophosphorylated state that can stimulate subsequent ribonuclease cleavage. The polypeptide is RNA pyrophosphohydrolase (Xanthomonas campestris pv. campestris (strain 8004)).